Here is a 68-residue protein sequence, read N- to C-terminus: Peptide Hp1412 (68 aa).

The N-terminal stretch at 1 to 23 (MKTHFAIFLITLFLFQMFSQSDA) is a signal peptide. Cys36 carries the cysteine amide modification. Residues 40–68 (GLSDLYDLDEMFDGEISQADIDFLKELMR) constitute a propeptide that is removed on maturation.

The protein belongs to the non-disulfide-bridged peptide (NDBP) superfamily. Short antimicrobial peptide (group 4) family. In terms of tissue distribution, expressed by the venom gland.

The protein localises to the secreted. The protein resides in the target cell membrane. Functionally, amphipathic peptide with antimicrobial activity. This is Peptide Hp1412 from Heterometrus petersii (Asian forest scorpion).